A 220-amino-acid polypeptide reads, in one-letter code: Adenylate kinase (220 aa).

Residue 12-17 (GAGKGT) coordinates ATP. The tract at residues 32–62 (STGDIFRDIVKKENDELGKKIKEIMERGELV) is NMP. AMP is bound by residues Thr33, Arg38, 60-62 (ELV), 88-91 (GYPR), and Gln95. Residues 129 to 166 (ARRICPKCGRIYNLISLPPKEDELCDDCKVKLVQREDD) are LID. Arg130 provides a ligand contact to ATP. Zn(2+) contacts are provided by Cys133 and Cys136. 139 to 140 (IY) contributes to the ATP binding site. Residues Cys153 and Cys156 each contribute to the Zn(2+) site. Residues Arg163 and Arg174 each contribute to the AMP site. Ile202 lines the ATP pocket.

This sequence belongs to the adenylate kinase family. In terms of assembly, monomer.

It localises to the cytoplasm. The catalysed reaction is AMP + ATP = 2 ADP. It participates in purine metabolism; AMP biosynthesis via salvage pathway; AMP from ADP: step 1/1. In terms of biological role, catalyzes the reversible transfer of the terminal phosphate group between ATP and AMP. Plays an important role in cellular energy homeostasis and in adenine nucleotide metabolism. The polypeptide is Adenylate kinase (Thermotoga maritima (strain ATCC 43589 / DSM 3109 / JCM 10099 / NBRC 100826 / MSB8)).